Consider the following 1558-residue polypeptide: ABC transporter NFT1 (1558 aa).

The Extracellular segment spans residues 1 to 29 (MIKNGTCPYWERDDLSECARREYIEFKFP). Asn4 is a glycosylation site (N-linked (GlcNAc...) asparagine). A helical membrane pass occupies residues 30–50 (LFILLTGMIYAFCKVFRAFYL). Residues 51 to 103 (RGKNHTNEAPEFEEQGNGNHEYARFSVLRLKSAWESRSFCNVNNRSTFDKFKK) lie on the Cytoplasmic side of the membrane. Residues 104–124 (FIEGAFIVLQLTIHLYILSSM) traverse the membrane as a helical segment. The Extracellular portion of the chain corresponds to 125-130 (PMDNKK). The chain crosses the membrane as a helical span at residues 131–151 (FFHQGFLVQMFLWILLLVVIT). Topologically, residues 152 to 169 (LRLISASQSFRWVLACKR) are cytoplasmic. Residues 170–190 (DLWAVSFYSYASLFTLSILPL) traverse the membrane as a helical segment. Over 191-201 (RSVFIGKIKDK) the chain is Extracellular. A helical membrane pass occupies residues 202–222 (IMVKYIISETFIDLALLLLLS). The Cytoplasmic portion of the chain corresponds to 223–302 (TSSIEGTRYS…SSKKGRLLPN (80 aa)). Residues 303–323 (IICYFKAVFISQLFLAFVSSF) traverse the membrane as a helical segment. Residues 311–621 (FISQLFLAFV…IASTVSLLIQ (311 aa)) enclose the ABC transmembrane type-1 1 domain. At 324–351 (LNFVPSLLMPRILSYVNDPKSKSWNLVS) the chain is on the extracellular side. Residues 352-374 (LYVSSMLVSKIIATTCRGQGLFL) form a helical membrane-spanning segment. The Cytoplasmic segment spans residues 375–449 (GEKGTMQLRT…VMSIDAFKVS (75 aa)). Residues 410–434 (NASTSFEENPDSSEAEPRKKSSRKD) are disordered. Residues 424-434 (AEPRKKSSRKD) show a composition bias toward basic and acidic residues. The chain crosses the membrane as a helical span at residues 450-470 (EAMNTFYLACEAVFMTVTALM). The Extracellular segment spans residues 471–481 (ILYSLLGWSAF). A helical membrane pass occupies residues 482–504 (AGTFALLAMIPLNFWCATFYGNY). Topologically, residues 505–558 (QADQLILTDKRTSGISEALNSIRVIKLLAWENLFYQKIINVRDGEIRLLKKKAT) are cytoplasmic. A helical membrane pass occupies residues 559–579 (IFFLNHLIWFFGPTLVSAITF). The Extracellular segment spans residues 580-584 (SVFIK). The helical transmembrane segment at 585-605 (FQNQTLTPTIAFTALSLFAIL) threads the bilayer. Topologically, residues 606–953 (RTPMDQIAST…KFSAYKWLAD (348 aa)) are cytoplasmic. The ABC transporter 1 domain occupies 651–892 (FGFEDASMEW…NEFLRESINN (242 aa)). 686–693 (GPTGSGKS) serves as a coordination point for ATP. The span at 892-901 (NDSKNTTHNQ) shows a compositional bias: polar residues. The segment at 892–926 (NDSKNTTHNQIDLKRSTTSKKTKNGDPEGGNSQDE) is disordered. The helical transmembrane segment at 954-974 (YFGGLGVVFVFTSSSILIHGI) threads the bilayer. In terms of domain architecture, ABC transmembrane type-1 2 spans 961–1251 (VFVFTSSSIL…IIKVFSSVEL (291 aa)). Over 975–1013 (TLSQGFWLRYWLDTGSSGSKSTWLYRIVEGHSNIYFLLT) the chain is Extracellular. Residues 1014 to 1034 (YIIIGLVSSFLTSGKVWIAII) traverse the membrane as a helical segment. Residues 1035-1082 (SGTNVTKKIFAKLLSSILYAKLRFHNVTPTGRIMNRFSKDMDIIDQQL) are Cytoplasmic-facing. Residues 1083–1105 (IPNFEGLSYSVVVCLWIILLIGY) form a helical membrane-spanning segment. Residues 1106 to 1109 (VTPQ) are Extracellular-facing. A helical transmembrane segment spans residues 1110–1132 (FLLFAIPLCALYYTVCTLYLRAS). The Cytoplasmic portion of the chain corresponds to 1133–1199 (RELKRIDNIN…ATEWITYRVD (67 aa)). Residues 1200–1220 (IIGTLVLFSSSVMIIMKASYL) form a helical membrane-spanning segment. The Extracellular portion of the chain corresponds to 1221-1222 (DA). Residues 1223-1243 (GLAGILLSNAFSFTETAQWII) form a helical membrane-spanning segment. Residues 1244 to 1558 (KVFSSVELLM…LAKVSFDNKR (315 aa)) lie on the Cytoplasmic side of the membrane. Residues 1285–1538 (VELKNLSLRY…RNTIFYRLCR (254 aa)) form the ABC transporter 2 domain. 1319–1326 (GRTGAGKS) contributes to the ATP binding site.

Belongs to the ABC transporter superfamily. ABCC family. Conjugate transporter (TC 3.A.1.208) subfamily.

It is found in the membrane. The chain is ABC transporter NFT1 (NFT1) from Saccharomyces cerevisiae (Baker's yeast).